The sequence spans 745 residues: MDWLLDVFATWLYGLKVIAITLAVIMFISGLDDFFIDVVYWVRRIKRKLSVYRRYPRMSYRELYKPDEKPLAIMVPAWNETGVIGNMAELAATTLDYENYHIFVGTYPNDPDTQRDVDEVCARFPNVHKVVCARPGPTSKADCLNNVLDAITQFERSANFAFAGFILHDAEDVISPMELRLFNYLVERKDLIQIPVYPFEREWTHFTSMTYIDEFSELHGKDVPVREALAGQVPSAGVGTCFSRRAVTALLADGDGIAFDVQSLTEDYDIGFRLKEKGMTEIFVRFPVVDEAKEREQRKFLQHARTSNMICVREYFPDTFSTAVRQKSRWIIGIVFQGFKTHKWTSSLTLNYFLWRDRKGAISNFVSFLAMLVMIQLLLLLAYESLWPDAWHFLSIFSGSAWLMTLLWLNFGLMVNRIVQRVIFVTGYYGLTQGLLSVLRLFWGNLINFMANWRALKQVLQHGDPRRVAWDKTTHDFPSVTGDTRSLRPLGQILLENQVITEEQLDTALRNRVEGLRLGGSMLMQGLISAEQLAQALAEQNGVAWESIDAWQIPSSLIAEMPASVALHYAVLPLRLENDELIVGSEDGIDPVSLAALTRKVGRKVRYVIVLRGQIVTGLRHWYARRRGHDPRAMLYNAVQHQWLTEQQAGEIWRQYVPHQFLFAEILTTLGHINRSAINVLLLRHERSSLPLGKFLVTEGVISQETLDRVLTIQRELQVSMQSLLLKAGLNTEQVAQLESENEGE.

3 consecutive transmembrane segments (helical) span residues 8-28 (FATWLYGLKVIAITLAVIMFI), 362-382 (ISNFVSFLAMLVMIQLLLLLA), and 393-413 (FLSIFSGSAWLMTLLWLNFGL).

The protein resides in the cell inner membrane. Its function is as follows. Required for bacteriophage N4 adsorption. May be a component of the phage receptor. This Escherichia coli O157:H7 protein is Bacteriophage N4 adsorption protein B (nfrB).